Consider the following 412-residue polypeptide: ATP phosphoribosyltransferase regulatory subunit (412 aa).

This sequence belongs to the class-II aminoacyl-tRNA synthetase family. HisZ subfamily. In terms of assembly, heteromultimer composed of HisG and HisZ subunits.

The protein localises to the cytoplasm. The protein operates within amino-acid biosynthesis; L-histidine biosynthesis; L-histidine from 5-phospho-alpha-D-ribose 1-diphosphate: step 1/9. Its function is as follows. Required for the first step of histidine biosynthesis. May allow the feedback regulation of ATP phosphoribosyltransferase activity by histidine. This Dehalococcoides mccartyi (strain ATCC BAA-2266 / KCTC 15142 / 195) (Dehalococcoides ethenogenes (strain 195)) protein is ATP phosphoribosyltransferase regulatory subunit.